A 492-amino-acid chain; its full sequence is Glycosyltransferase alg8 (492 aa).

4 helical membrane passes run 13-32 (GWLLFLSFLMLVAVALPPQV), 47-69 (IGVWRYSMGIIHFLRGMLFLYVV), 379-401 (LTVAIIGSIKYSIAIFIAYLLWV), and 421-443 (PAYPLILYYNQIVGAVVKIHVFF).

This sequence belongs to the glycosyltransferase 2 family.

It is found in the cell membrane. The protein operates within glycan biosynthesis; alginate biosynthesis. Functionally, possibly a processive enzyme that polymerizes GDP-mannuronic acid. The sequence is that of Glycosyltransferase alg8 (alg8) from Azotobacter vinelandii.